Consider the following 105-residue polypeptide: Ketoisovalerate oxidoreductase subunit VorD (105 aa).

4Fe-4S ferredoxin-type domains follow at residues 44–73 (FMPVIDESKCVKCYICWKFCPEPAIYIKED) and 74–103 (GFVAIDYDYCKGCGICANECPTKAITMVRE). Residues C53, C56, C59, C63, C83, C86, C89, and C93 each coordinate [4Fe-4S] cluster.

Heterotetramer of one alpha, one beta, one delta and one gamma chain. It depends on [4Fe-4S] cluster as a cofactor.

It carries out the reaction 3-methyl-2-oxobutanoate + 2 oxidized [2Fe-2S]-[ferredoxin] + CoA = 2-methylpropanoyl-CoA + 2 reduced [2Fe-2S]-[ferredoxin] + CO2 + H(+). This is Ketoisovalerate oxidoreductase subunit VorD (vorD) from Pyrococcus abyssi (strain GE5 / Orsay).